Here is an 813-residue protein sequence, read N- to C-terminus: Leucine--tRNA ligase (813 aa).

A 'HIGH' region motif is present at residues 41 to 51 (PYPSGTLHMGH). Residues 575–579 (KMSKS) carry the 'KMSKS' region motif. Residue lysine 578 coordinates ATP.

It belongs to the class-I aminoacyl-tRNA synthetase family.

Its subcellular location is the cytoplasm. It carries out the reaction tRNA(Leu) + L-leucine + ATP = L-leucyl-tRNA(Leu) + AMP + diphosphate. This chain is Leucine--tRNA ligase, found in Francisella tularensis subsp. tularensis (strain WY96-3418).